A 255-amino-acid chain; its full sequence is Taurine import ATP-binding protein TauB (255 aa).

The region spanning 2–229 is the ABC transporter domain; that stretch reads LQISHLYADY…RFVAGESSRS (228 aa). 34-41 is a binding site for ATP; that stretch reads GPSGCGKT.

It belongs to the ABC transporter superfamily. Taurine importer (TC 3.A.1.17.1) family. As to quaternary structure, the complex is composed of two ATP-binding proteins (TauB), two transmembrane proteins (TauC) and a solute-binding protein (TauA).

It is found in the cell inner membrane. The enzyme catalyses taurine(out) + ATP + H2O = taurine(in) + ADP + phosphate + H(+). Its function is as follows. Part of the ABC transporter complex TauABC involved in taurine import. Responsible for energy coupling to the transport system. This Shigella boydii serotype 4 (strain Sb227) protein is Taurine import ATP-binding protein TauB.